The following is a 392-amino-acid chain: Anhydro-N-acetylmuramic acid kinase (392 aa).

19–26 (GTSVDGID) contacts ATP.

It belongs to the anhydro-N-acetylmuramic acid kinase family.

It carries out the reaction 1,6-anhydro-N-acetyl-beta-muramate + ATP + H2O = N-acetyl-D-muramate 6-phosphate + ADP + H(+). The protein operates within amino-sugar metabolism; 1,6-anhydro-N-acetylmuramate degradation. Its pathway is cell wall biogenesis; peptidoglycan recycling. Catalyzes the specific phosphorylation of 1,6-anhydro-N-acetylmuramic acid (anhMurNAc) with the simultaneous cleavage of the 1,6-anhydro ring, generating MurNAc-6-P. Is required for the utilization of anhMurNAc either imported from the medium or derived from its own cell wall murein, and thus plays a role in cell wall recycling. The sequence is that of Anhydro-N-acetylmuramic acid kinase from Trichormus variabilis (strain ATCC 29413 / PCC 7937) (Anabaena variabilis).